The following is a 428-amino-acid chain: C4-dicarboxylate transport protein (428 aa).

A run of 8 helical transmembrane segments spans residues 8–28 (VLYV…HYYP), 44–64 (LIKM…IAGM), 78–98 (LLYF…ATHI), 148–168 (GEIL…AHLG), 184–204 (VLFG…FGAM), 222–242 (LIGT…GAIA), 307–327 (IYMT…LTWM), and 355–375 (AATL…ILGI).

It belongs to the dicarboxylate/amino acid:cation symporter (DAACS) (TC 2.A.23) family.

It is found in the cell inner membrane. Functionally, responsible for the transport of dicarboxylates such as succinate, fumarate, and malate from the periplasm across the membrane. The polypeptide is C4-dicarboxylate transport protein (Burkholderia mallei (strain ATCC 23344)).